The primary structure comprises 433 residues: Phosphoribosylamine--glycine ligase (433 aa).

Residues 110 to 317 (RNFMKKYGIE…FVDIMSAVVK (208 aa)) form the ATP-grasp domain. Residue 137–194 (IEKLGDVAVKPSGLTGGKGVKVMGDQLPDLKAAKAYTSELLEKGSVVIEERFIGEEFT) participates in ATP binding. Residues Q275, E287, and N289 each contribute to the Mg(2+) site. Mn(2+)-binding residues include Q275, E287, and N289.

This sequence belongs to the GARS family. It depends on Mg(2+) as a cofactor. Requires Mn(2+) as cofactor.

The enzyme catalyses 5-phospho-beta-D-ribosylamine + glycine + ATP = N(1)-(5-phospho-beta-D-ribosyl)glycinamide + ADP + phosphate + H(+). The protein operates within purine metabolism; IMP biosynthesis via de novo pathway; N(1)-(5-phospho-D-ribosyl)glycinamide from 5-phospho-alpha-D-ribose 1-diphosphate: step 2/2. The protein is Phosphoribosylamine--glycine ligase of Methanosarcina barkeri (strain Fusaro / DSM 804).